The primary structure comprises 309 residues: Probable manganese-dependent inorganic pyrophosphatase (309 aa).

Residues H9, D13, D15, D75, H97, and D149 each contribute to the Mn(2+) site.

The protein belongs to the PPase class C family. Mn(2+) is required as a cofactor.

The protein localises to the cytoplasm. It catalyses the reaction diphosphate + H2O = 2 phosphate + H(+). The sequence is that of Probable manganese-dependent inorganic pyrophosphatase from Bacillus cereus (strain ATCC 10987 / NRS 248).